The primary structure comprises 218 residues: Uracil-DNA glycosylase (218 aa).

It belongs to the uracil-DNA glycosylase (UDG) superfamily. UNG family. As to quaternary structure, homodimer. Interacts with protein OPG148. Component of the Uracil-DNA glycosylase(UDG)-OPG148-polymerase complex; OPG148 and UDG form a heterodimeric processivity factor that associates with OPG71 to form the processive polymerase holoenzyme.

It catalyses the reaction Hydrolyzes single-stranded DNA or mismatched double-stranded DNA and polynucleotides, releasing free uracil.. In terms of biological role, plays an essential role in viral replication as a component of the DNA polymerase processivity factor. Excises uracil residues from the DNA which can arise as a result of misincorporation of dUMP residues by DNA polymerase or due to deamination of cytosine. The protein is Uracil-DNA glycosylase (OPG116) of Monkeypox virus.